We begin with the raw amino-acid sequence, 207 residues long: 2,3-bisphosphoglycerate-dependent phosphoglycerate mutase (207 aa).

Substrate is bound by residues 10 to 17, 23 to 24, Arg-62, 89 to 92, Lys-100, 116 to 117, and 160 to 161; these read RHGQSEWN, TG, ERDY, RR, and GN. His-11 functions as the Tele-phosphohistidine intermediate in the catalytic mechanism. The active-site Proton donor/acceptor is Glu-89.

It belongs to the phosphoglycerate mutase family. BPG-dependent PGAM subfamily. As to quaternary structure, homodimer.

It catalyses the reaction (2R)-2-phosphoglycerate = (2R)-3-phosphoglycerate. It functions in the pathway carbohydrate degradation; glycolysis; pyruvate from D-glyceraldehyde 3-phosphate: step 3/5. Functionally, catalyzes the interconversion of 2-phosphoglycerate and 3-phosphoglycerate. In Bradyrhizobium sp. (strain BTAi1 / ATCC BAA-1182), this protein is 2,3-bisphosphoglycerate-dependent phosphoglycerate mutase.